The sequence spans 31 residues: Cytochrome b6-f complex subunit 6 (31 aa).

A helical membrane pass occupies residues 4 to 26 (ITSYFGFLLAASTITTALFIGLS).

This sequence belongs to the PetL family. As to quaternary structure, the 4 large subunits of the cytochrome b6-f complex are cytochrome b6, subunit IV (17 kDa polypeptide, PetD), cytochrome f and the Rieske protein, while the 4 small subunits are PetG, PetL, PetM and PetN. The complex functions as a dimer.

It localises to the plastid. The protein localises to the chloroplast thylakoid membrane. Component of the cytochrome b6-f complex, which mediates electron transfer between photosystem II (PSII) and photosystem I (PSI), cyclic electron flow around PSI, and state transitions. PetL is important for photoautotrophic growth as well as for electron transfer efficiency and stability of the cytochrome b6-f complex. The polypeptide is Cytochrome b6-f complex subunit 6 (Acorus calamus (Sweet flag)).